The sequence spans 615 residues: DNA mismatch repair protein MutL (615 aa).

The protein belongs to the DNA mismatch repair MutL/HexB family.

Functionally, this protein is involved in the repair of mismatches in DNA. It is required for dam-dependent methyl-directed DNA mismatch repair. May act as a 'molecular matchmaker', a protein that promotes the formation of a stable complex between two or more DNA-binding proteins in an ATP-dependent manner without itself being part of a final effector complex. This Parabacteroides distasonis (strain ATCC 8503 / DSM 20701 / CIP 104284 / JCM 5825 / NCTC 11152) protein is DNA mismatch repair protein MutL.